Consider the following 474-residue polypeptide: 6-phospho-beta-galactosidase (474 aa).

Gln-19, His-116, Asn-159, Glu-160, and Asn-297 together coordinate D-galactose 6-phosphate. Glu-160 functions as the Proton donor in the catalytic mechanism. Catalysis depends on Glu-375, which acts as the Nucleophile. 4 residues coordinate D-galactose 6-phosphate: Ser-433, Trp-434, Lys-440, and Tyr-442.

The protein belongs to the glycosyl hydrolase 1 family.

It carries out the reaction a 6-phospho-beta-D-galactoside + H2O = D-galactose 6-phosphate + an alcohol. It participates in carbohydrate metabolism; lactose degradation; D-galactose 6-phosphate and beta-D-glucose from lactose 6-phosphate: step 1/1. This Lacticaseibacillus casei (strain BL23) (Lactobacillus casei) protein is 6-phospho-beta-galactosidase.